The primary structure comprises 36 residues: Photosystem I reaction center subunit VIII (36 aa).

Residues 6–28 (LPSIFVPLVGLMFPAIAMASLSL) traverse the membrane as a helical segment.

It belongs to the PsaI family.

It is found in the plastid. Its subcellular location is the chloroplast thylakoid membrane. Its function is as follows. May help in the organization of the PsaL subunit. The polypeptide is Photosystem I reaction center subunit VIII (Calycanthus floridus var. glaucus (Eastern sweetshrub)).